The primary structure comprises 433 residues: Glutamate-1-semialdehyde 2,1-aminomutase (433 aa).

Lys-273 is subject to N6-(pyridoxal phosphate)lysine.

This sequence belongs to the class-III pyridoxal-phosphate-dependent aminotransferase family. HemL subfamily. As to quaternary structure, homodimer. The cofactor is pyridoxal 5'-phosphate.

Its subcellular location is the cytoplasm. It catalyses the reaction (S)-4-amino-5-oxopentanoate = 5-aminolevulinate. It functions in the pathway porphyrin-containing compound metabolism; protoporphyrin-IX biosynthesis; 5-aminolevulinate from L-glutamyl-tRNA(Glu): step 2/2. The protein is Glutamate-1-semialdehyde 2,1-aminomutase of Ralstonia nicotianae (strain ATCC BAA-1114 / GMI1000) (Ralstonia solanacearum).